We begin with the raw amino-acid sequence, 522 residues long: Ankyrin repeat and death domain-containing protein 1A (522 aa).

ANK repeat units follow at residues 14–43, 47–76, 90–119, 123–152, 158–187, 191–220, 224–253, 257–286, 290–319, 323–352, and 356–385; these read PLERQLHEAARQNNVGRMQELIGRRVNTRA, VGRVALHWAAGAGHEQAVRLLLEHEAAVDE, FGMNALLLSAWFGHLRILQILVNSGAKIHC, DGLTLLHCAAQKGHVPVLAFIMEDLEDVAL, LGRTAFHRAAEHGQLDALDFLVGSGCDHNV, EGNTALHLAAGRGHMAVLQRLVDIGLDLEE, EGLTALHSAAGGSHPDCVQLLLRAGSTVNA, KNLSCLHYAALSGSEDVSRVLIHAGGCANV, QGASPLHLAVRHNFPALVRLLINSDSDVNA, RQQTPLHLAAEHAWQDIADMLLIAGVDLNL, and QGKTALAVAVRSNHVSLVDMIIKADRFYRW. The Death domain occupies 413–501; that stretch reads SVLWRLASRY…DLAGWSTMAR (89 aa).

In Homo sapiens (Human), this protein is Ankyrin repeat and death domain-containing protein 1A (ANKDD1A).